The chain runs to 202 residues: ATP-dependent Clp protease proteolytic subunit (202 aa).

Ser-106 (nucleophile) is an active-site residue. The active site involves His-131.

Belongs to the peptidase S14 family. In terms of assembly, fourteen ClpP subunits assemble into 2 heptameric rings which stack back to back to give a disk-like structure with a central cavity, resembling the structure of eukaryotic proteasomes.

It localises to the cytoplasm. It carries out the reaction Hydrolysis of proteins to small peptides in the presence of ATP and magnesium. alpha-casein is the usual test substrate. In the absence of ATP, only oligopeptides shorter than five residues are hydrolyzed (such as succinyl-Leu-Tyr-|-NHMec, and Leu-Tyr-Leu-|-Tyr-Trp, in which cleavage of the -Tyr-|-Leu- and -Tyr-|-Trp bonds also occurs).. Its function is as follows. Cleaves peptides in various proteins in a process that requires ATP hydrolysis. Has a chymotrypsin-like activity. Plays a major role in the degradation of misfolded proteins. In Shewanella sp. (strain W3-18-1), this protein is ATP-dependent Clp protease proteolytic subunit.